The following is a 119-amino-acid chain: Thioredoxin H4 (119 aa).

One can recognise a Thioredoxin domain in the interval 2-115 (AAEEGQVIGC…LQAKIVKHTG (114 aa)). Active-site nucleophile residues include Cys-40 and Cys-43. A disulfide bridge links Cys-40 with Cys-43.

It belongs to the thioredoxin family. Plant H-type subfamily. As to quaternary structure, interacts with MDH1.

Its subcellular location is the cytoplasm. Functionally, thiol-disulfide oxidoreductase probably involved in the redox regulation of a number of cytosolic enzymes. Possesses insulin disulfide bonds reducing activity. The chain is Thioredoxin H4 (TRX4) from Arabidopsis thaliana (Mouse-ear cress).